The chain runs to 113 residues: U11-theraphotoxin-Hhn1a (113 aa).

A signal peptide spans 1-21 (MNTVRVTFLLVFVLAVSLGRA). A propeptide spanning residues 22–74 (DKDENRMEMQEKTEQGKSYLDFAENLLLQKLEELEAKLLEEDSEESRNSRQKR) is cleaved from the precursor. Intrachain disulfides connect Cys-75/Cys-90, Cys-82/Cys-95, and Cys-89/Cys-110.

Belongs to the neurotoxin 14 (magi-1) family. 01 (HNTX-16) subfamily. As to expression, expressed by the venom gland.

The protein localises to the secreted. Probable ion channel inhibitor. The polypeptide is U11-theraphotoxin-Hhn1a (Cyriopagopus hainanus (Chinese bird spider)).